The primary structure comprises 382 residues: Mannitol-1-phosphate 5-dehydrogenase (382 aa).

3 to 14 serves as a coordination point for NAD(+); that stretch reads AVHFGAGNIGRG.

The protein belongs to the mannitol dehydrogenase family.

It carries out the reaction D-mannitol 1-phosphate + NAD(+) = beta-D-fructose 6-phosphate + NADH + H(+). This is Mannitol-1-phosphate 5-dehydrogenase from Aliivibrio salmonicida (strain LFI1238) (Vibrio salmonicida (strain LFI1238)).